We begin with the raw amino-acid sequence, 361 residues long: Tetraacyldisaccharide 4'-kinase (361 aa).

68-75 contacts ATP; sequence TVGGTGKT.

It belongs to the LpxK family.

The catalysed reaction is a lipid A disaccharide + ATP = a lipid IVA + ADP + H(+). It functions in the pathway glycolipid biosynthesis; lipid IV(A) biosynthesis; lipid IV(A) from (3R)-3-hydroxytetradecanoyl-[acyl-carrier-protein] and UDP-N-acetyl-alpha-D-glucosamine: step 6/6. Functionally, transfers the gamma-phosphate of ATP to the 4'-position of a tetraacyldisaccharide 1-phosphate intermediate (termed DS-1-P) to form tetraacyldisaccharide 1,4'-bis-phosphate (lipid IVA). This chain is Tetraacyldisaccharide 4'-kinase, found in Pelobacter propionicus (strain DSM 2379 / NBRC 103807 / OttBd1).